The sequence spans 779 residues: Probable glutamine--tRNA ligase (779 aa).

Residues Glu-268 to Asn-270 and His-274 to Ala-280 contribute to the ATP site. L-glutamine-binding residues include Asp-300 and Tyr-440. ATP contacts are provided by residues Thr-459, Arg-488 to Leu-489, and Leu-496 to Lys-498.

It belongs to the class-I aminoacyl-tRNA synthetase family.

It carries out the reaction tRNA(Gln) + L-glutamine + ATP = L-glutaminyl-tRNA(Gln) + AMP + diphosphate. This Dictyostelium discoideum (Social amoeba) protein is Probable glutamine--tRNA ligase (glnS).